We begin with the raw amino-acid sequence, 468 residues long: GTPase Der (468 aa).

2 EngA-type G domains span residues 3 to 169 and 199 to 372; these read PVMA…SPPD and IRLA…KAAT. GTP is bound by residues 9 to 16, 56 to 60, 119 to 122, 205 to 212, 252 to 256, and 317 to 320; these read GRANVGKS, DTGGF, NKAE, GRPNVGKS, DTAGL, and NKWD. Positions 373–457 constitute a KH-like domain; it reads CKMSTPVLTR…PLRIELKTSH (85 aa).

This sequence belongs to the TRAFAC class TrmE-Era-EngA-EngB-Septin-like GTPase superfamily. EngA (Der) GTPase family. As to quaternary structure, associates with the 50S ribosomal subunit.

GTPase that plays an essential role in the late steps of ribosome biogenesis. The sequence is that of GTPase Der from Verminephrobacter eiseniae (strain EF01-2).